The chain runs to 307 residues: Homoserine kinase (307 aa).

ATP is bound at residue 85–95 (PLTRGLGSSAA).

It belongs to the GHMP kinase family. Homoserine kinase subfamily.

It localises to the cytoplasm. The catalysed reaction is L-homoserine + ATP = O-phospho-L-homoserine + ADP + H(+). The protein operates within amino-acid biosynthesis; L-threonine biosynthesis; L-threonine from L-aspartate: step 4/5. Its function is as follows. Catalyzes the ATP-dependent phosphorylation of L-homoserine to L-homoserine phosphate. The chain is Homoserine kinase from Caldicellulosiruptor bescii (strain ATCC BAA-1888 / DSM 6725 / KCTC 15123 / Z-1320) (Anaerocellum thermophilum).